A 104-amino-acid chain; its full sequence is Flagellar hook-basal body complex protein FliE (104 aa).

This sequence belongs to the FliE family.

It localises to the bacterial flagellum basal body. This chain is Flagellar hook-basal body complex protein FliE, found in Pectobacterium atrosepticum (strain SCRI 1043 / ATCC BAA-672) (Erwinia carotovora subsp. atroseptica).